We begin with the raw amino-acid sequence, 119 residues long: MAVKIRLAKKGRKKLALYDIVVADQRAPRDGRFIEKLGNYNPNTNPSTVVLHEDKVIQWLFNGAQPTNTVKNILSSQGILLKRHLQIGVKKGAITQEEADKRFLVWKESKTQKPGKFKA.

Belongs to the bacterial ribosomal protein bS16 family.

The protein is Small ribosomal subunit protein bS16 of Amoebophilus asiaticus (strain 5a2).